The primary structure comprises 403 residues: uncharacterized protein (403 aa).

Positions glutamine 3–glycine 126 constitute a Bro-N domain.

This is an uncharacterized protein from Lepidoptera (butterflies and moths).